A 245-amino-acid chain; its full sequence is Phosducin (245 aa).

Residues 1–70 (MEKAKSQSLE…DKDSKERFSR (70 aa)) are disordered. The region spanning 1 to 244 (MEKAKSQSLE…LEQTNMEEDM (244 aa)) is the Phosducin domain. Composition is skewed to basic and acidic residues over residues 28-50 (DWRK…KEIL) and 58-69 (SRDDKDSKERFS). Residue Ser-73 is modified to Phosphoserine; by PKA. The segment at 111–245 (YGFVYELESG…EQTNMEEDME (135 aa)) is thioredoxin fold.

The protein belongs to the phosducin family. As to quaternary structure, interacts with CRX. Forms a complex with the beta and gamma subunits of the GTP-binding protein, transducin. In terms of processing, light-induced changes in cyclic nucleotide levels modulate the phosphorylation of this protein by cAMP kinase.

It is found in the cytoplasm. It localises to the cytosol. The protein resides in the nucleus. Its subcellular location is the cell projection. The protein localises to the cilium. It is found in the photoreceptor outer segment. It localises to the photoreceptor inner segment. Functionally, inhibits the transcriptional activation activity of the cone-rod homeobox CRX. May participate in the regulation of visual phototransduction or in the integration of photoreceptor metabolism. The chain is Phosducin (PDC) from Bos taurus (Bovine).